Consider the following 172-residue polypeptide: ATP-dependent kinase-like protein notR' (172 aa).

It belongs to the YFH7 family.

Functionally, ATP-dependent kinase-like protein; part of the gene cluster that mediates the biosynthesis of notoamide, a fungal indole alkaloid that belongs to a family of natural products containing a characteristic bicyclo[2.2.2]diazaoctane core. The first step of notoamide biosynthesis involves coupling of L-proline and L-tryptophan by the bimodular NRPS notE', to produce cyclo-L-tryptophan-L-proline called brevianamide F. The reverse prenyltransferase notF' then acts as a deoxybrevianamide E synthase and converts brevianamide F to deoxybrevianamide E via reverse prenylation at C-2 of the indole ring leading to the bicyclo[2.2.2]diazaoctane core. Deoxybrevianamide E is further hydroxylated at C-6 of the indole ring, likely catalyzed by the cytochrome P450 monooxygenase notG', to yield 6-hydroxy-deoxybrevianamide E. 6-hydroxy-deoxybrevianamide E is a specific substrate of the prenyltransferase notC' for normal prenylation at C-7 to produce 6-hydroxy-7-prenyl-deoxybrevianamide, also called notoamide S. As the proposed pivotal branching point in notoamide biosynthesis, notoamide S can be diverted to notoamide E through an oxidative pyran ring closure putatively catalyzed by either notH' cytochrome P450 monooxygenase or the notD' FAD-linked oxidoreductase. This step would be followed by an indole 2,3-epoxidation-initiated pinacol-like rearrangement catalyzed by the notB' FAD-dependent monooxygenase leading to the formation of notoamide C and notoamide D. On the other hand notoamide S is converted to notoamide T by notH' (or notD'), a bifunctional oxidase that also functions as the intramolecular Diels-Alderase responsible for generation of (-)-notoamide T. To generate antipodal (+)-notoaminide T, notH (or notD) in Aspergillus strain MF297-2 is expected to catalyze a Diels-Alder reaction leading to the opposite stereochemistry. The remaining oxidoreductase notD' (or notH') likely catalyzes the oxidative pyran ring formation to yield (-)-stephacidin A. The FAD-dependent monooxygenase notI' is highly similar to notB' and is predicted to catalyze a similar conversion from (-)-stephacidin A to (+)-notoamide B via the 2,3-epoxidation of (-)-stephacidin A followed by a pinacol-type rearrangement. Finally, it remains unclear which enzyme could be responsible for the final hydroxylation steps leading to notoamide A and sclerotiamide. The function of notQ' in the notoamide biosynthesis has not been determined yet. In Aspergillus versicolor, this protein is ATP-dependent kinase-like protein notR'.